Consider the following 358-residue polypeptide: Acyl-CoA Delta-12 desaturase (358 aa).

Helical transmembrane passes span 30 to 50 (IILY…AMFY) and 55 to 75 (TVFY…AGSH). Fe cation contacts are provided by H75, H80, H112, H115, and H116. The Histidine box-1 signature appears at 75-80 (HRLWAH). Residues 112–116 (HRVHH) carry the Histidine box-2 motif. The next 2 helical transmembrane spans lie at 175-195 (TFFA…YFWG) and 200-220 (TAFF…TFLV). The Fe cation site is built by H225, H254, H257, and H258. Positions 254 to 258 (HNYHH) match the Histidine box-3 motif.

The protein belongs to the fatty acid desaturase type 1 family. The cofactor is Fe(2+).

It is found in the membrane. The enzyme catalyses (9Z)-octadecenoyl-CoA + 2 Fe(II)-[cytochrome b5] + O2 + 2 H(+) = (9Z,12Z)-octadecadienoyl-CoA + 2 Fe(III)-[cytochrome b5] + 2 H2O. The catalysed reaction is (9Z)-hexadecenoyl-CoA + 2 Fe(II)-[cytochrome b5] + O2 + 2 H(+) = (9Z,12Z)-hexadecadienoyl-CoA + 2 Fe(III)-[cytochrome b5] + 2 H2O. Functionally, catalyzes the formation of a Delta12 double bond, acting on monounsaturated fatty acyl substrates like palmitoleoyl-CoA ((9Z)-hexadecenoyl-CoA) and oleoyl-CoA ((9Z)-octadecenoyl-CoA) with higher desaturation activity on (9Z)-octadecenoyl-CoA than (9Z)-hexadecenoyl-CoA. Requires preexisting cis double bond at the Delta9 position of fatty acyls to be able to insert the Delta12 double bond. Delta12-desaturation of (9Z)-octadecenoyl-CoA in insects produces (9Z,12Z)-octadecadienoyl-CoA (linoleoyl-CoA) which may be used to supply precursors of crucial mediators of immunity and reproduction and other essential functions. This is Acyl-CoA Delta-12 desaturase from Tribolium castaneum (Red flour beetle).